Consider the following 338-residue polypeptide: uncharacterized protein (338 aa).

Positions 1 to 29 (MIKQLYKNITICSLAISTALTVFPATSYA) are cleaved as a signal peptide.

Belongs to the aerolysin family.

This is an uncharacterized protein from Staphylococcus aureus (strain Mu50 / ATCC 700699).